The chain runs to 853 residues: DNA topoisomerase 1 (853 aa).

A Toprim domain is found at 3-136 (KSLVIVESPV…KFRRVVFNEI (134 aa)). Mg(2+) contacts are provided by E9 and D105. One can recognise a Topo IA-type catalytic domain in the interval 152–565 (NMNRVYSQQA…SFFDNFSQQL (414 aa)). The tract at residues 186–191 (SAGRVQ) is interaction with DNA. Catalysis depends on Y313, which acts as the O-(5'-phospho-DNA)-tyrosine intermediate. C4-type zinc fingers lie at residues 589 to 621 (CSLC…EKRC), 649 to 676 (CKKC…NPSC), and 699 to 724 (CEKC…NDTC).

It belongs to the type IA topoisomerase family. In terms of assembly, monomer. It depends on Mg(2+) as a cofactor.

The catalysed reaction is ATP-independent breakage of single-stranded DNA, followed by passage and rejoining.. Releases the supercoiling and torsional tension of DNA, which is introduced during the DNA replication and transcription, by transiently cleaving and rejoining one strand of the DNA duplex. Introduces a single-strand break via transesterification at a target site in duplex DNA. The scissile phosphodiester is attacked by the catalytic tyrosine of the enzyme, resulting in the formation of a DNA-(5'-phosphotyrosyl)-enzyme intermediate and the expulsion of a 3'-OH DNA strand. The free DNA strand then undergoes passage around the unbroken strand, thus removing DNA supercoils. Finally, in the religation step, the DNA 3'-OH attacks the covalent intermediate to expel the active-site tyrosine and restore the DNA phosphodiester backbone. The sequence is that of DNA topoisomerase 1 from Buchnera aphidicola subsp. Schizaphis graminum (strain Sg).